The chain runs to 323 residues: MSSSLEQLKATGTTVVSDSGDFVSIGKYKPQDATTNPSLILAASKKAEYAKLIDVAIDYAKQKGGSIDQQVDDALDRLLVEFGKEILKIIPGKVSTEVDARYSFDTEASVNKALHLIELYGEQGISKDRILIKIAATWEGIKAAEILQRDHGINTNLTLMFSLVQAIGAAEAGAYLISPFVGRILDWFKASTKKEYSKEEDPGVQSVKTIFNYYKKYGYNTIVMGASFRNTGEITELAGCDYLTISPNLLEDLLNSNEPVPKKLDASQAASLDIEKKSYINDEALFRFDFNEDQMAVEKLREGISKFAADAVTLKSILKEKLA.

The active-site Schiff-base intermediate with substrate is Lys133.

The protein belongs to the transaldolase family. Type 1 subfamily. In terms of assembly, monomer.

It catalyses the reaction D-sedoheptulose 7-phosphate + D-glyceraldehyde 3-phosphate = D-erythrose 4-phosphate + beta-D-fructose 6-phosphate. The protein operates within carbohydrate degradation; pentose phosphate pathway; D-glyceraldehyde 3-phosphate and beta-D-fructose 6-phosphate from D-ribose 5-phosphate and D-xylulose 5-phosphate (non-oxidative stage): step 2/3. Its function is as follows. Important for the balance of metabolites in the pentose-phosphate pathway. Involved in xylose fermentation to ethanol. This chain is Transaldolase, found in Gibberella intermedia (Bulb rot disease fungus).